The sequence spans 993 residues: Protein translocase subunit SecA (993 aa).

ATP-binding positions include Gln-102, 120-124, and Asp-523; that span reads GEGKT. Residues 910–962 are disordered; it reads ENAPEPQISGGNGQQPPQRRQQTSLDDLEKQFERKKKRELEQARMAGGGMPDA. The segment covering 936 to 951 has biased composition (basic and acidic residues); it reads DLEKQFERKKKRELEQ. Residues Cys-979, Cys-981, Cys-990, and His-991 each contribute to the Zn(2+) site.

This sequence belongs to the SecA family. As to quaternary structure, monomer and homodimer. Part of the essential Sec protein translocation apparatus which comprises SecA, SecYEG and auxiliary proteins SecDF. Other proteins may also be involved. Requires Zn(2+) as cofactor.

The protein localises to the cell inner membrane. It is found in the cytoplasm. The enzyme catalyses ATP + H2O + cellular proteinSide 1 = ADP + phosphate + cellular proteinSide 2.. In terms of biological role, part of the Sec protein translocase complex. Interacts with the SecYEG preprotein conducting channel. Has a central role in coupling the hydrolysis of ATP to the transfer of proteins into and across the cell membrane, serving as an ATP-driven molecular motor driving the stepwise translocation of polypeptide chains across the membrane. The protein is Protein translocase subunit SecA of Koribacter versatilis (strain Ellin345).